Reading from the N-terminus, the 207-residue chain is Suppressor of IKBKE 1 (207 aa).

2 coiled-coil regions span residues 4–32 (TIDKILQDAKTLLERLKDHDNAAESLIDQ) and 154–193 (DAIQLDEDKAYNIQEKLAQLELENKELREILSTSKESLHS). The segment at 186 to 207 (TSKESLHSSKRESEWNFSEKTQ) is disordered. Over residues 189-199 (ESLHSSKRESE) the composition is skewed to basic and acidic residues.

Belongs to the SIKE family. As to quaternary structure, interacts with IKBKE and TBK1 via its coiled coil region. Interaction with TBK1 is disrupted upon viral infection or TLR3 stimulation. Interacts with CDC42BPB. Associates with the STRIPAK core complex composed of PP2A catalytic and scaffolding subunits, the striatins (PP2A regulatory subunits), the striatin-associated proteins MOB4, STRIP1 and STRIP2, PDCD10 and members of the STE20 kinases, such as STK24 and STK26.

Functionally, suppressor of IKK-epsilon. Associates with the striatin-interacting phosphatase and kinase (STRIPAK) core complex, forming the extended (SIKE1:SLMAP)STRIPAK complex. The (SIKE1:SLMAP)STRIPAK complex dephosphorylates STK3 leading to the inhibition of Hippo signaling and the control of cell growth. This chain is Suppressor of IKBKE 1 (sike1), found in Xenopus tropicalis (Western clawed frog).